Reading from the N-terminus, the 459-residue chain is Ribulose bisphosphate carboxylase (459 aa).

Substrate is bound at residue Asn-111. Residue Lys-166 is the Proton acceptor of the active site. Lys-168 is a binding site for substrate. The Mg(2+) site is built by Lys-191, Asp-193, and Glu-194. The residue at position 191 (Lys-191) is an N6-carboxylysine. His-287 (proton acceptor) is an active-site residue. Substrate contacts are provided by Arg-288, His-321, and Ser-368.

It belongs to the RuBisCO large chain family. Type II subfamily. In terms of assembly, the complex is approximately 350 kDa when isolated from either T.denitrificans or R.sphaeroides, suggesting a homohexamer or homooctamer structure. It depends on Mg(2+) as a cofactor.

It catalyses the reaction 2 (2R)-3-phosphoglycerate + 2 H(+) = D-ribulose 1,5-bisphosphate + CO2 + H2O. The enzyme catalyses D-ribulose 1,5-bisphosphate + O2 = 2-phosphoglycolate + (2R)-3-phosphoglycerate + 2 H(+). In terms of biological role, ruBisCO catalyzes two reactions: the carboxylation of D-ribulose 1,5-bisphosphate, the primary event in carbon dioxide fixation, as well as the oxidative fragmentation of the pentose substrate. Both reactions occur simultaneously and in competition at the same active site. In Thiobacillus denitrificans (strain ATCC 25259 / T1), this protein is Ribulose bisphosphate carboxylase (cbbM).